The primary structure comprises 197 residues: Protein SYM1 (197 aa).

4 consecutive transmembrane segments (helical) span residues Ala-20 to Thr-40, Ala-55 to Asn-75, Val-97 to Met-117, and Leu-137 to Leu-157.

It belongs to the peroxisomal membrane protein PXMP2/4 family.

It is found in the mitochondrion inner membrane. Its function is as follows. May be involved in cellular response to stress. Required to maintain mitochondrial DNA (mtDNA) integrity and stability. Required for ethanol metabolism and tolerance during heat shock. The chain is Protein SYM1 (SYM1) from Saccharomyces cerevisiae (strain ATCC 204508 / S288c) (Baker's yeast).